The primary structure comprises 235 residues: Myelin protein zero-like protein 3 (235 aa).

An N-terminal signal peptide occupies residues 1–31 (MQQRGAAGSRGCALFPLLGVLFFQGVYIVFS). In terms of domain architecture, Ig-like V-type spans 32–148 (LEIRADAHVR…NIPMTELTVT (117 aa)). The Extracellular portion of the chain corresponds to 32 to 158 (LEIRADAHVR…ERGFGTMLSS (127 aa)). A disulfide bond links Cys-52 and Cys-128. Asn-123 is a glycosylation site (N-linked (GlcNAc...) asparagine). Residues 159-179 (VALLSILVFVPSAVVVALLLV) traverse the membrane as a helical segment. Residues 180–235 (RMGRKAAGLKKRSRSGYKKSSIEVSDDTDQEEEEACMARLCVRCAECLDSDYEETY) are Cytoplasmic-facing.

The protein belongs to the myelin P0 protein family.

It is found in the membrane. Mediates homophilic cell-cell adhesion. The polypeptide is Myelin protein zero-like protein 3 (MPZL3) (Homo sapiens (Human)).